The primary structure comprises 84 residues: Cell division topological specificity factor (84 aa).

This sequence belongs to the MinE family.

Its function is as follows. Prevents the cell division inhibition by proteins MinC and MinD at internal division sites while permitting inhibition at polar sites. This ensures cell division at the proper site by restricting the formation of a division septum at the midpoint of the long axis of the cell. This is Cell division topological specificity factor from Burkholderia cenocepacia (strain HI2424).